The following is a 624-amino-acid chain: Heat shock factor protein 5 (624 aa).

The DNA-binding element occupies 11 to 228 (NPNNFPAKLW…FHRSFRRDNL (218 aa)). Disordered stretches follow at residues 52 to 77 (LSPP…SGVG), 112 to 138 (GAAG…HSPH), 186 to 214 (SASA…HGPV), 429 to 461 (CPSS…LEPL), and 572 to 605 (GPAN…DLHL). Composition is skewed to gly residues over residues 58-77 (GAGG…SGVG) and 112-127 (GAAG…GPAG). Low complexity-rich tracts occupy residues 186–197 (SASASTSPLQHQ) and 442–457 (PNAN…QASQ). Position 600 is a phosphoserine (Ser600).

Belongs to the HSF family. In terms of assembly, homooligomer. As to expression, highly expressed in testis particularly in spermatocytes (at protein level). Not expressed in fetal testis and ovary.

The protein resides in the nucleus. Its subcellular location is the chromosome. Its function is as follows. DNA-binding transcription factor that is essential for male fertility, spermatogenesis and meiotic prophase progression in spermatocytes under non-stress conditions. Positvely and negatively regulates gene expression to ensure progression of meiotic prophase beyond pachytene stage in spermatocytes. Plays a role in male germline meiotic sex chromosome remodeling and silencing through regulation of SMARCA4. This is Heat shock factor protein 5 (Hsf5) from Mus musculus (Mouse).